A 303-amino-acid chain; its full sequence is Uricase (303 aa).

At Ala2 the chain carries N-acetylalanine. An N6-acetyllysine; alternate mark is found at Lys10 and Lys23. N6-succinyllysine; alternate occurs at positions 10 and 23. The Charge relay system role is filled by Lys23. Residues Lys27 and Lys36 each carry the N6-acetyllysine modification. Ser39 and Ser63 each carry phosphoserine. Catalysis depends on Thr68, which acts as the Charge relay system. 2 residues coordinate urate: Thr68 and Asp69. Lys118, Lys122, and Lys164 each carry N6-acetyllysine. Phe170 lines the urate pocket. An N6-acetyllysine mark is found at Lys175 and Lys185. Arg187 contacts urate. Lys220 and Lys227 each carry N6-acetyllysine; alternate. 2 positions are modified to N6-succinyllysine; alternate: Lys220 and Lys227. Ser231 is subject to Phosphoserine. Positions 234, 235, and 261 each coordinate urate. His263 functions as the Charge relay system in the catalytic mechanism. An N6-acetyllysine modification is found at Lys277. At Tyr288 the chain carries Phosphotyrosine. The Microbody targeting signal signature appears at 301–303 (SRL).

It belongs to the uricase family. In terms of processing, acetylation of Lys-118, Lys-164 and Lys-290 is observed in liver mitochondria from fasted mice but not from fed mice. May be deacetylated by Sirt5; however it is unclear whether Sirt5 mediates deacetylation or desuccinylation of Uox; additional evidence is required to validate these results.

The protein localises to the peroxisome. It localises to the mitochondrion. It carries out the reaction urate + O2 + H2O = 5-hydroxyisourate + H2O2. The protein operates within purine metabolism; urate degradation; (S)-allantoin from urate: step 1/3. Its function is as follows. Catalyzes the oxidation of uric acid to 5-hydroxyisourate, which is further processed to form (S)-allantoin. The chain is Uricase (Uox) from Mus musculus (Mouse).